Here is a 219-residue protein sequence, read N- to C-terminus: Interleukin-6 (219 aa).

Residues 1–20 form the signal peptide; that stretch reads MNSSTRYLSLLSALVVLVKG. A disulfide bridge connects residues cysteine 103 and cysteine 111.

It belongs to the IL-6 superfamily. In terms of assembly, component of a hexamer of two molecules each of IL6, IL6R and IL6ST; first binds to IL6R to associate with the signaling subunit IL6ST. In terms of tissue distribution, expressed in spleen, gill and gastrointestinal tract, ovary and brain. Highest expression in ovary.

The protein resides in the secreted. Cytokine with a wide variety of biological functions in immunity, tissue regeneration, and metabolism. Binds to IL6R, then the complex associates to the signaling subunit IL6ST/gp130 to trigger the intracellular IL6-signaling pathway. The interaction with the membrane-bound IL6R and IL6ST stimulates 'classic signaling', whereas the binding of IL6 and soluble IL6R to IL6ST stimulates 'trans-signaling'. Alternatively, 'cluster signaling' occurs when membrane-bound IL6:IL6R complexes on transmitter cells activate IL6ST receptors on neighboring receiver cells. The sequence is that of Interleukin-6 (il6) from Oncorhynchus mykiss (Rainbow trout).